The sequence spans 654 residues: Sphingosine kinase 2 (654 aa).

A compositionally biased stretch (basic and acidic residues) spans 1 to 17 (MNGHLEAEEQQDQRPDQ). Residues 1–28 (MNGHLEAEEQQDQRPDQELTGSWGHGPR) are disordered. The interval 1–175 (MNGHLEAEEQ…LPGDGEITPD (175 aa)) is required for binding to sulfatide and phosphoinositides and for membrane localizatione. A Nuclear localization signal motif is present at residues 122 to 130 (RGRRGARRR). Positions 178–325 (PRPPRLLLLV…LDLLSVTLAS (148 aa)) constitute a DAGKc domain. Residues 188–190 (NPF) and 220–224 (TERQN) each bind ATP. 245–248 (SGDG) is a binding site for substrate. D247 (proton donor/acceptor) is an active-site residue. Residues E252 and 277 to 279 (GSG) each bind ATP. D344 contacts substrate. R351 and R357 together coordinate ATP. S387 is modified (phosphoserine; by MAPK). A phosphoserine mark is found at S393 and S399. The interval 400 to 509 (ELTLTPDPAP…PLPTPDARVG (110 aa)) is disordered. The short motif at 416-425 (LHRSVSDLPL) is the Nuclear export signal element. Phosphoserine; by PKD occurs at positions 419 and 421. The segment covering 447–461 (NGGGPELAGDWGGAG) has biased composition (gly residues). Residues 462 to 482 (DAPLSPDPLLSSPPGSPKAAL) are compositionally biased toward low complexity. S477 bears the Phosphoserine mark. T614 carries the post-translational modification Phosphothreonine; by MAPK. 622 to 624 (DGE) provides a ligand contact to ATP.

As to quaternary structure, interacts with histone H3. Interacts with HDAC1, HDAC2, MBD2 and SIN3A. Interacts with EEF1A1; the interaction enhances SPHK2 kinase activity. Interacts with PHB2. It depends on Mg(2+) as a cofactor. Post-translationally, phosphorylated by PKD on Ser-419 and Ser-421 upon PMA treatment. Phosphorylation induces export from the nucleus to the cytoplasm. Phosphorylated by MAPK1 and MAPK2 at Ser-387 and Thr-614, phosphorylation is induced by agonists such as EGF and PMA and increases kinase activity. Cleaved by CASP1 in apoptotic cells. The truncated form is released from cells. As to expression, mainly expressed in adult kidney, liver, and brain. Expressed in cerebral cortex and hippocampus (at protein level). Isoform 1 is the predominant form expressed in most tissues.

The protein localises to the cytoplasm. The protein resides in the nucleus. It localises to the endoplasmic reticulum. Its subcellular location is the mitochondrion inner membrane. It is found in the lysosome membrane. It carries out the reaction a sphingoid base + ATP = a sphingoid 1-phosphate + ADP + H(+). The catalysed reaction is sphing-4-enine + ATP = sphing-4-enine 1-phosphate + ADP + H(+). It catalyses the reaction sphinganine + ATP = sphinganine 1-phosphate + ADP + H(+). The enzyme catalyses (4R)-hydroxysphinganine + ATP = (4R)-hydroxysphinganine 1-phosphate + ADP + H(+). Its activity is regulated as follows. Inhibited by sulfatide. Kinase activity is increased by phosphorylation by MAPK2 upon PMA or EGF treatments. In terms of biological role, catalyzes the phosphorylation of sphingosine to form sphingosine-1-phosphate (SPP), a lipid mediator with both intra- and extracellular functions. Also acts on D-erythro-dihydrosphingosine, D-erythro-sphingosine and L-threo-dihydrosphingosine. Binds phosphoinositides. In contrast to prosurvival SPHK1, has a positive effect on intracellular ceramide levels, inhibits cells growth and enhances apoptosis. In mitochondria, is important for cytochrome-c oxidase assembly and mitochondrial respiration. The SPP produced in mitochondria binds PHB2 and modulates the regulation via PHB2 of complex IV assembly and respiration. In nucleus, plays a role in epigenetic regulation of gene expression. Interacts with HDAC1 and HDAC2 and, through SPP production, inhibits their enzymatic activity, preventing the removal of acetyl groups from lysine residues with histones. Up-regulates acetylation of histone H3-K9, histone H4-K5 and histone H2B-K12. In nucleus, may have an inhibitory effect on DNA synthesis and cell cycle. In mast cells, is the main regulator of SPP production which mediates calcium influx, NF-kappa-B activation, cytokine production, such as TNF and IL6, and degranulation of mast cells. In dopaminergic neurons, is involved in promoting mitochondrial functions regulating ATP and ROS levels. Also involved in the regulation of glucose and lipid metabolism. This is Sphingosine kinase 2 from Homo sapiens (Human).